Reading from the N-terminus, the 687-residue chain is Pentatricopeptide repeat-containing protein At3g09060 (687 aa).

18 PPR repeats span residues 42–76, 77–107, 113–147, 148–182, 183–217, 218–253, 254–288, 289–323, 324–358, 359–392, 393–427, 428–462, 463–497, 498–532, 533–567, 568–602, 603–637, and 638–672; these read SAVV…ECKC, DEDV…MREI, AIRS…GVAP, NLQT…GFKP, DVFS…GVAP, DVTC…SVYP, NVKT…EREK, DLYT…KASI, DVVT…NSVN, IVSY…GYAA, DKTT…GGHL, DVYA…GVEL, NSHV…GCRP, TVVS…GWKP, DLKT…GLET, DVMM…NCTA, NLVT…GLQP, and DIIS…GIFP.

It belongs to the PPR family. P subfamily.

The sequence is that of Pentatricopeptide repeat-containing protein At3g09060 from Arabidopsis thaliana (Mouse-ear cress).